The following is a 134-amino-acid chain: ATP synthase epsilon chain (134 aa).

The protein belongs to the ATPase epsilon chain family. F-type ATPases have 2 components, CF(1) - the catalytic core - and CF(0) - the membrane proton channel. CF(1) has five subunits: alpha(3), beta(3), gamma(1), delta(1), epsilon(1). CF(0) has three main subunits: a, b and c.

Its subcellular location is the cell membrane. Produces ATP from ADP in the presence of a proton gradient across the membrane. In Alkaliphilus metalliredigens (strain QYMF), this protein is ATP synthase epsilon chain.